Reading from the N-terminus, the 494-residue chain is Keratin, type I cytoskeletal 12 (494 aa).

Over residues 1–12 the composition is skewed to polar residues; sequence MDLSNNTMSLSV. Residues 1-32 are disordered; that stretch reads MDLSNNTMSLSVRTPGLSRRLSSQSVIGRPRG. The tract at residues 1–124 is head; it reads MDLSNNTMSL…GNDGGLLSGS (124 aa). Positions 125-160 are coil 1A; it reads EKETMQNLNDRLASYLDKVRALEEANTELENKIREW. An IF rod domain is found at 125–440; that stretch reads EKETMQNLND…RLLDGEAQGD (316 aa). A linker 1 region spans residues 164–182; sequence RGTGTADASQSDYSKYYPL. The interval 183-274 is coil 1B; the sequence is IEDLRNKIIS…KNHEDELQSF (92 aa). Residues 275 to 297 form a linker 12 region; the sequence is RVGGPGEVSVEMDAAPGVDLTRL. Positions 298 to 435 are coil 2; sequence LNDMRAQYET…IETYRRLLDG (138 aa). Positions 436–494 are tail; it reads EAQGDGLEESLFVTDSKSQAQSTDSSKDPTKTRKIKTVVQEMVNGEVVSSQVQEIEELM. The disordered stretch occupies residues 446–468; that stretch reads LFVTDSKSQAQSTDSSKDPTKTR. Positions 448 to 459 are enriched in polar residues; that stretch reads VTDSKSQAQSTD.

It belongs to the intermediate filament family. As to quaternary structure, heterotetramer of two type I and two type II keratins. Keratin-3 associates with keratin-12. Expressed in the corneal epithelium (at protein level).

Involved in corneal epithelium organization, integrity and corneal keratin expression. This chain is Keratin, type I cytoskeletal 12 (KRT12), found in Homo sapiens (Human).